A 917-amino-acid chain; its full sequence is Protein translocase subunit SecA (917 aa).

ATP-binding positions include Q87, 105–109, and D516; that span reads GEGKT. Zn(2+)-binding residues include C901, C903, C912, and H913.

It belongs to the SecA family. As to quaternary structure, monomer and homodimer. Part of the essential Sec protein translocation apparatus which comprises SecA, SecYEG and auxiliary proteins SecDF-YajC and YidC. Zn(2+) serves as cofactor.

Its subcellular location is the cell inner membrane. The protein resides in the cytoplasm. The enzyme catalyses ATP + H2O + cellular proteinSide 1 = ADP + phosphate + cellular proteinSide 2.. Its function is as follows. Part of the Sec protein translocase complex. Interacts with the SecYEG preprotein conducting channel. Has a central role in coupling the hydrolysis of ATP to the transfer of proteins into and across the cell membrane, serving both as a receptor for the preprotein-SecB complex and as an ATP-driven molecular motor driving the stepwise translocation of polypeptide chains across the membrane. The chain is Protein translocase subunit SecA from Acidovorax ebreus (strain TPSY) (Diaphorobacter sp. (strain TPSY)).